Here is a 716-residue protein sequence, read N- to C-terminus: Polyribonucleotide nucleotidyltransferase (716 aa).

Residues aspartate 495 and aspartate 501 each contribute to the Mg(2+) site. In terms of domain architecture, KH spans 562 to 621 (PRLFRIQINPEQIGLVIGPGGKTIRSITEQTGAKIDIEDTGAVTISAVDADSALRAKSII). An S1 motif domain is found at 631–699 (GDVYIGKVTR…QKGRVNLTRK (69 aa)).

It belongs to the polyribonucleotide nucleotidyltransferase family. The cofactor is Mg(2+).

It is found in the cytoplasm. The catalysed reaction is RNA(n+1) + phosphate = RNA(n) + a ribonucleoside 5'-diphosphate. Functionally, involved in mRNA degradation. Catalyzes the phosphorolysis of single-stranded polyribonucleotides processively in the 3'- to 5'-direction. In Synechococcus elongatus (strain ATCC 33912 / PCC 7942 / FACHB-805) (Anacystis nidulans R2), this protein is Polyribonucleotide nucleotidyltransferase.